Consider the following 156-residue polypeptide: Small ribosomal subunit protein uS7c (156 aa).

The protein belongs to the universal ribosomal protein uS7 family. In terms of assembly, part of the 30S ribosomal subunit.

It localises to the plastid. The protein resides in the chloroplast. Functionally, one of the primary rRNA binding proteins, it binds directly to 16S rRNA where it nucleates assembly of the head domain of the 30S subunit. The chain is Small ribosomal subunit protein uS7c (rps7) from Guillardia theta (Cryptophyte).